We begin with the raw amino-acid sequence, 125 residues long: Insulin growth factor-like family member 3 (125 aa).

The signal sequence occupies residues 1 to 24 (MRPRCCILALVCWITVFLLQCSKG).

It belongs to the IGFL family. Detected in the cerebellum.

The protein resides in the secreted. Its function is as follows. Potential ligand of the IGFLR1 cell membrane receptor. The sequence is that of Insulin growth factor-like family member 3 (IGFL3) from Homo sapiens (Human).